A 447-amino-acid polypeptide reads, in one-letter code: MTRKLFGTDGVRGRANSYPMTAEVALRLGAAAGRYFRPVGAGSPRVVIGKDTRLSGYMLENALTAGLTSTGMNVLLLGPVPTPAVGFLTRSMRADLGVMISASHNPHEDNGIKFFGPDGFKLSDEAEAEIEAILAGEIQPAQPGNIGRAKRIDDGRGRYQEYCKTTFPAGLRLDGLKVVIDCANGAAYRAAPEVLWELGAEVIPLGVEPDGKNINLRCGSTHPEAAAEAVRAHGADVGICLDGDADRVIILDEQGRQADGDQIMALFAARWAEEGRLRDATLVATVMSNLGLERFLSARGLRLERTPVGDRYVVEAMRRGGWNLGGEQSGHIVMTDFATTGDGLLAGLQFLAAMAQTGRKASELSRSFETVPQLLQNVRYAAGQEPLTAPSVQAVIREAEVRLNGSGRLLIRKSGTEPLIRVMAECEDEALLRDVVEEIVAAVKDAA.

Ser-103 (phosphoserine intermediate) is an active-site residue. Residues Ser-103, Asp-242, Asp-244, and Asp-246 each contribute to the Mg(2+) site. Position 103 is a phosphoserine (Ser-103).

This sequence belongs to the phosphohexose mutase family. It depends on Mg(2+) as a cofactor. Activated by phosphorylation.

It carries out the reaction alpha-D-glucosamine 1-phosphate = D-glucosamine 6-phosphate. In terms of biological role, catalyzes the conversion of glucosamine-6-phosphate to glucosamine-1-phosphate. This is Phosphoglucosamine mutase from Cereibacter sphaeroides (strain ATCC 17025 / ATH 2.4.3) (Rhodobacter sphaeroides).